The primary structure comprises 134 residues: Small ribosomal subunit protein uS11 (134 aa).

The disordered stretch occupies residues 114-134 (DVTPVPSDSTRRKGGRRGRRL). Over residues 125 to 134 (RKGGRRGRRL) the composition is skewed to basic residues.

Belongs to the universal ribosomal protein uS11 family.

In Candida albicans (Yeast), this protein is Small ribosomal subunit protein uS11 (RPS14).